A 329-amino-acid polypeptide reads, in one-letter code: 4-hydroxythreonine-4-phosphate dehydrogenase (329 aa).

Positions 136 and 137 each coordinate substrate. A divalent metal cation contacts are provided by H166, H211, and H266. Residues K274, N283, and R292 each contribute to the substrate site.

The protein belongs to the PdxA family. As to quaternary structure, homodimer. Requires Zn(2+) as cofactor. The cofactor is Mg(2+). Co(2+) serves as cofactor.

The protein localises to the cytoplasm. The enzyme catalyses 4-(phosphooxy)-L-threonine + NAD(+) = 3-amino-2-oxopropyl phosphate + CO2 + NADH. It participates in cofactor biosynthesis; pyridoxine 5'-phosphate biosynthesis; pyridoxine 5'-phosphate from D-erythrose 4-phosphate: step 4/5. Its function is as follows. Catalyzes the NAD(P)-dependent oxidation of 4-(phosphooxy)-L-threonine (HTP) into 2-amino-3-oxo-4-(phosphooxy)butyric acid which spontaneously decarboxylates to form 3-amino-2-oxopropyl phosphate (AHAP). The polypeptide is 4-hydroxythreonine-4-phosphate dehydrogenase (Citrobacter koseri (strain ATCC BAA-895 / CDC 4225-83 / SGSC4696)).